The chain runs to 441 residues: Ribulose bisphosphate carboxylase large chain (441 aa).

Lys-4 is subject to N6,N6,N6-trimethyllysine. Asn-113 and Thr-163 together coordinate substrate. Residue Lys-165 is the Proton acceptor of the active site. Lys-167 provides a ligand contact to substrate. Mg(2+) contacts are provided by Lys-191, Asp-193, and Glu-194. Lys-191 carries the post-translational modification N6-carboxylysine. His-284 acts as the Proton acceptor in catalysis. Arg-285, His-317, and Ser-369 together coordinate substrate.

This sequence belongs to the RuBisCO large chain family. Type I subfamily. As to quaternary structure, heterohexadecamer of 8 large chains and 8 small chains; disulfide-linked. The disulfide link is formed within the large subunit homodimers. It depends on Mg(2+) as a cofactor. Post-translationally, the disulfide bond which can form in the large chain dimeric partners within the hexadecamer appears to be associated with oxidative stress and protein turnover.

The protein localises to the plastid. It is found in the chloroplast. The enzyme catalyses 2 (2R)-3-phosphoglycerate + 2 H(+) = D-ribulose 1,5-bisphosphate + CO2 + H2O. It carries out the reaction D-ribulose 1,5-bisphosphate + O2 = 2-phosphoglycolate + (2R)-3-phosphoglycerate + 2 H(+). In terms of biological role, ruBisCO catalyzes two reactions: the carboxylation of D-ribulose 1,5-bisphosphate, the primary event in carbon dioxide fixation, as well as the oxidative fragmentation of the pentose substrate in the photorespiration process. Both reactions occur simultaneously and in competition at the same active site. The sequence is that of Ribulose bisphosphate carboxylase large chain from Darlingtonia californica (California pitcher plant).